The chain runs to 293 residues: NAD kinase (293 aa).

Aspartate 74 serves as the catalytic Proton acceptor. Residues aspartate 74–glycine 75, arginine 79, asparagine 148–glutamate 149, arginine 176, aspartate 178, threonine 189–serine 194, and glutamine 248 contribute to the NAD(+) site.

This sequence belongs to the NAD kinase family. The cofactor is a divalent metal cation.

It localises to the cytoplasm. The enzyme catalyses NAD(+) + ATP = ADP + NADP(+) + H(+). In terms of biological role, involved in the regulation of the intracellular balance of NAD and NADP, and is a key enzyme in the biosynthesis of NADP. Catalyzes specifically the phosphorylation on 2'-hydroxyl of the adenosine moiety of NAD to yield NADP. This is NAD kinase from Blochmanniella floridana.